The following is a 194-amino-acid chain: Molybdenum cofactor guanylyltransferase (194 aa).

Residues 12–14 (LAG), Lys25, Asn53, Asp70, and Asp100 contribute to the GTP site. Asp100 contacts Mg(2+).

The protein belongs to the MobA family. Monomer. Mg(2+) serves as cofactor.

The protein localises to the cytoplasm. It catalyses the reaction Mo-molybdopterin + GTP + H(+) = Mo-molybdopterin guanine dinucleotide + diphosphate. Its function is as follows. Transfers a GMP moiety from GTP to Mo-molybdopterin (Mo-MPT) cofactor (Moco or molybdenum cofactor) to form Mo-molybdopterin guanine dinucleotide (Mo-MGD) cofactor. The polypeptide is Molybdenum cofactor guanylyltransferase (Aliivibrio salmonicida (strain LFI1238) (Vibrio salmonicida (strain LFI1238))).